Reading from the N-terminus, the 297-residue chain is tRNA-cytidine(32) 2-sulfurtransferase (297 aa).

The PP-loop motif motif lies at serine 45 to serine 50. The [4Fe-4S] cluster site is built by cysteine 120, cysteine 123, and cysteine 211.

The protein belongs to the TtcA family. In terms of assembly, homodimer. It depends on Mg(2+) as a cofactor. The cofactor is [4Fe-4S] cluster.

The protein resides in the cytoplasm. The enzyme catalyses cytidine(32) in tRNA + S-sulfanyl-L-cysteinyl-[cysteine desulfurase] + AH2 + ATP = 2-thiocytidine(32) in tRNA + L-cysteinyl-[cysteine desulfurase] + A + AMP + diphosphate + H(+). The protein operates within tRNA modification. Functionally, catalyzes the ATP-dependent 2-thiolation of cytidine in position 32 of tRNA, to form 2-thiocytidine (s(2)C32). The sulfur atoms are provided by the cysteine/cysteine desulfurase (IscS) system. The chain is tRNA-cytidine(32) 2-sulfurtransferase from Vibrio campbellii (strain ATCC BAA-1116).